A 454-amino-acid chain; its full sequence is F-box/WD-40 repeat-containing protein At3g52030 (454 aa).

The 47-residue stretch at 20–66 (PTSIESLDADILCIIFSFLDLFDLVHCTVVCNSWNAVIKRLKLLQAS) folds into the F-box domain. 8 WD repeats span residues 85-116 (DRPA…RWEA), 117-153 (HSHR…CMEE), 170-214 (SKKL…SIFP), 215-255 (SRAG…CSQI), 258-296 (TQGG…PVAT), 301-340 (ITAG…RLWE), 343-383 (VSPN…VLSR), and 422-454 (KVRP…FNLS).

The chain is F-box/WD-40 repeat-containing protein At3g52030 from Arabidopsis thaliana (Mouse-ear cress).